Consider the following 603-residue polypeptide: Dual specificity protein phosphatase CDC14A (603 aa).

An a region spans residues 7 to 162 (ELIGACEFMK…GLQHGFFDFE (156 aa)). Residues 163–176 (TFDAEEYEHYERVE) form a linker region. Positions 177–343 (NGDFNWIVPG…QGDIFRSKLK (167 aa)) are b. Residues 179–336 (DFNWIVPGKF…KQASLWVQGD (158 aa)) enclose the Tyrosine-protein phosphatase domain. C278 acts as the Phosphocysteine intermediate in catalysis. Residue S484 is modified to Phosphoserine. Positions 518–538 (NGSTQTPGRNYPELNNNQYTR) are enriched in polar residues. Positions 518 to 583 (NGSTQTPGRN…RPSFPGSLSS (66 aa)) are disordered. Low complexity-rich tracts occupy residues 539-558 (SSNS…LNSS) and 573-583 (LRPSFPGSLSS). A Phosphoserine modification is found at S592.

This sequence belongs to the protein-tyrosine phosphatase family. Non-receptor class CDC14 subfamily. Interacts with KIF20A. Interaction is required to localize CDC14 to the midzone of the mitotic spindle. Expressed in the inner ear.

The protein localises to the nucleus. It localises to the cytoplasm. The protein resides in the cytoskeleton. It is found in the microtubule organizing center. Its subcellular location is the centrosome. The protein localises to the spindle. It localises to the cell projection. The protein resides in the kinocilium. It is found in the spindle pole. Its subcellular location is the stereocilium. It catalyses the reaction O-phospho-L-tyrosyl-[protein] + H2O = L-tyrosyl-[protein] + phosphate. The catalysed reaction is O-phospho-L-seryl-[protein] + H2O = L-seryl-[protein] + phosphate. The enzyme catalyses O-phospho-L-threonyl-[protein] + H2O = L-threonyl-[protein] + phosphate. Its function is as follows. Dual-specificity phosphatase. Required for centrosome separation and productive cytokinesis during cell division. Dephosphorylates SIRT2 around early anaphase. May dephosphorylate the APC subunit FZR1/CDH1, thereby promoting APC-FZR1 dependent degradation of mitotic cyclins and subsequent exit from mitosis. Required for normal hearing. This Mus musculus (Mouse) protein is Dual specificity protein phosphatase CDC14A (Cdc14a).